A 491-amino-acid chain; its full sequence is Probable succinate-semialdehyde dehydrogenase [NADP(+)] (491 aa).

Residues 163–164 (WN), 187–190 (KPAE), and 241–242 (GS) each bind NADP(+). Catalysis depends on E263, which acts as the Proton acceptor. L264 provides a ligand contact to NADP(+). C297 (nucleophile) is an active-site residue. E394 is an NADP(+) binding site.

This sequence belongs to the aldehyde dehydrogenase family.

It catalyses the reaction succinate semialdehyde + NADP(+) + H2O = succinate + NADPH + 2 H(+). The protein operates within amino-acid degradation; 4-aminobutanoate degradation. In terms of biological role, catalyzes the NADP(+) dependent oxidation of succinate semialdehyde to succinate. This chain is Probable succinate-semialdehyde dehydrogenase [NADP(+)] (gabD), found in Sinorhizobium fredii (strain NBRC 101917 / NGR234).